The primary structure comprises 198 residues: GTP cyclohydrolase 1 (198 aa).

3 residues coordinate Zn(2+): cysteine 87, histidine 90, and cysteine 158.

Belongs to the GTP cyclohydrolase I family. As to quaternary structure, homomer.

It catalyses the reaction GTP + H2O = 7,8-dihydroneopterin 3'-triphosphate + formate + H(+). Its pathway is cofactor biosynthesis; 7,8-dihydroneopterin triphosphate biosynthesis; 7,8-dihydroneopterin triphosphate from GTP: step 1/1. This is GTP cyclohydrolase 1 from Janthinobacterium sp. (strain Marseille) (Minibacterium massiliensis).